The chain runs to 487 residues: Vacuolar protein sorting-associated protein 30 (487 aa).

The interval proline 33–glutamate 129 is disordered. Over residues glutamine 52–serine 62 the composition is skewed to basic and acidic residues. Over residues serine 81–alanine 94 the composition is skewed to polar residues. Positions valine 152 to arginine 282 form a coiled coil. Positions serine 283–asparagine 480 are BARA. Positions tryptophan 456–alanine 481 are required for membrane-association, autophagic function during starvation and normal autophagosome morphology.

This sequence belongs to the beclin family. Component of the autophagy-specific VPS34 PI3-kinase complex I; and of the VPS34 PI3-kinase complex II.

It is found in the endosome membrane. Its subcellular location is the vacuole membrane. The protein resides in the preautophagosomal structure membrane. Its function is as follows. Required for cytoplasm to vacuole transport (Cvt), autophagy, nucleophagy, and mitophagy, as a part of the autophagy-specific VPS34 PI3-kinase complex I. This complex is essential to recruit the ATG8-phosphatidylinositol conjugate and the ATG12-ATG5 conjugate to the pre-autophagosomal structure. Also involved in endosome-to-Golgi retrograde transport as part of the VPS34 PI3-kinase complex II. Autophagy is required for proper vegetative growth, asexual/sexual reproduction, and full virulence. Autophagy is particularly involved in the biosynthesis of deoxynivalenol (DON), an important virulence determinant. The polypeptide is Vacuolar protein sorting-associated protein 30 (Gibberella zeae (strain ATCC MYA-4620 / CBS 123657 / FGSC 9075 / NRRL 31084 / PH-1) (Wheat head blight fungus)).